Reading from the N-terminus, the 275-residue chain is Intercellular adhesion molecule 2 (275 aa).

A signal peptide spans 1-24 (MSSFGYRTLTVALFALICCPGSDE). The Extracellular portion of the chain corresponds to 25-223 (KVFEVHVRPK…EIYEPVSDSQ (199 aa)). The region spanning 41-98 (KASLEVNCSTTCNQPEVGGLETSLDKILLDEQAQWKHYLVSNISHDTVLQCHFTCSGK) is the Ig-like C2-type 1 domain. N-linked (GlcNAc...) asparagine glycosylation is found at N47, N82, N105, N153, N158, N176, and N187. Cystine bridges form between C48/C91 and C52/C95. Residues 127-197 (GKSFTIECRV…FSCLAVLDLI (71 aa)) form the Ig-like C2-type 2 domain. A disulfide bridge links C134 with C190. The helical transmembrane segment at 224 to 248 (MVIIVTVVSVLLSLFVTSVLLCFIF) threads the bilayer. Residues 249–275 (GQHLRQQRMGTYGVRAAWRRLPQAFRP) are Cytoplasmic-facing. A required for interaction with EZR, MSN and RDX and co-localization to microvilli region spans residues 251–275 (HLRQQRMGTYGVRAAWRRLPQAFRP).

It belongs to the immunoglobulin superfamily. ICAM family. As to quaternary structure, interacts with RDX, EZR and MSN.

The protein localises to the membrane. The protein resides in the cell projection. It is found in the microvillus. ICAM proteins are ligands for the leukocyte adhesion protein LFA-1 (integrin alpha-L/beta-2). ICAM2 may play a role in lymphocyte recirculation by blocking LFA-1-dependent cell adhesion. It mediates adhesive interactions important for antigen-specific immune response, NK-cell mediated clearance, lymphocyte recirculation, and other cellular interactions important for immune response and surveillance. The polypeptide is Intercellular adhesion molecule 2 (ICAM2) (Gorilla gorilla gorilla (Western lowland gorilla)).